Consider the following 108-residue polypeptide: Zinc metalloproteinase/disintegrin (108 aa).

One can recognise a Peptidase M12B domain in the interval 1-19; it reads NEYQTYLTDRNPQCILNEP. Positions 20–35 are excised as a propeptide; sequence LRTDTVSTPVSGNELL. Residues 27-108 form the Disintegrin domain; that stretch reads TPVSGNELLE…ADCPRNGFYG (82 aa). Cystine bridges form between Cys-41–Cys-56, Cys-43–Cys-51, Cys-50–Cys-73, Cys-64–Cys-70, Cys-69–Cys-94, and Cys-82–Cys-101. Positions 86-88 match the Cell attachment site; atypical (KGD) motif; that stretch reads KGD.

This sequence belongs to the venom metalloproteinase (M12B) family. P-II subfamily. P-IIa sub-subfamily. As to quaternary structure, monomeric (disintegrin). It depends on Zn(2+) as a cofactor. In terms of tissue distribution, expressed by the venom gland.

Its subcellular location is the secreted. In terms of biological role, impairs hemostasis in the envenomed animal. Its function is as follows. Inhibits platelet aggregation induced by ADP, thrombin, platelet-activating factor and collagen. Acts by inhibiting fibrinogen interaction with platelet receptors GPIIb/GPIIIa (ITGA2B/ITGB3). The protein is Zinc metalloproteinase/disintegrin of Gloydius brevicauda (Korean slamosa snake).